Consider the following 281-residue polypeptide: Pantothenate synthetase (281 aa).

Residue 30–37 (MGNLHQGH) coordinates ATP. Histidine 37 functions as the Proton donor in the catalytic mechanism. Residue glutamine 61 coordinates (R)-pantoate. Glutamine 61 contributes to the beta-alanine binding site. An ATP-binding site is contributed by 149–152 (GNKD). Residue glutamine 155 participates in (R)-pantoate binding. ATP contacts are provided by residues isoleucine 178 and 186 to 189 (MSSR).

This sequence belongs to the pantothenate synthetase family. As to quaternary structure, homodimer.

It is found in the cytoplasm. The catalysed reaction is (R)-pantoate + beta-alanine + ATP = (R)-pantothenate + AMP + diphosphate + H(+). It functions in the pathway cofactor biosynthesis; (R)-pantothenate biosynthesis; (R)-pantothenate from (R)-pantoate and beta-alanine: step 1/1. In terms of biological role, catalyzes the condensation of pantoate with beta-alanine in an ATP-dependent reaction via a pantoyl-adenylate intermediate. This Shewanella baltica (strain OS185) protein is Pantothenate synthetase.